The primary structure comprises 739 residues: Phosphoribosylformylglycinamidine synthase subunit PurL (739 aa).

Residue His54 is part of the active site. Residues Tyr57 and Lys96 each contribute to the ATP site. Glu98 provides a ligand contact to Mg(2+). Substrate-binding positions include 99–102 and Arg121; that span reads SHNH. His100 functions as the Proton acceptor in the catalytic mechanism. Asp122 lines the Mg(2+) pocket. A substrate-binding site is contributed by Gln245. A Mg(2+)-binding site is contributed by Asp273. 317–319 contacts substrate; sequence ESQ. 2 residues coordinate ATP: Asp500 and Gly537. A Mg(2+)-binding site is contributed by Asn538. Ser540 is a binding site for substrate.

It belongs to the FGAMS family. Monomer. Part of the FGAM synthase complex composed of 1 PurL, 1 PurQ and 2 PurS subunits.

The protein resides in the cytoplasm. It carries out the reaction N(2)-formyl-N(1)-(5-phospho-beta-D-ribosyl)glycinamide + L-glutamine + ATP + H2O = 2-formamido-N(1)-(5-O-phospho-beta-D-ribosyl)acetamidine + L-glutamate + ADP + phosphate + H(+). It functions in the pathway purine metabolism; IMP biosynthesis via de novo pathway; 5-amino-1-(5-phospho-D-ribosyl)imidazole from N(2)-formyl-N(1)-(5-phospho-D-ribosyl)glycinamide: step 1/2. Functionally, part of the phosphoribosylformylglycinamidine synthase complex involved in the purines biosynthetic pathway. Catalyzes the ATP-dependent conversion of formylglycinamide ribonucleotide (FGAR) and glutamine to yield formylglycinamidine ribonucleotide (FGAM) and glutamate. The FGAM synthase complex is composed of three subunits. PurQ produces an ammonia molecule by converting glutamine to glutamate. PurL transfers the ammonia molecule to FGAR to form FGAM in an ATP-dependent manner. PurS interacts with PurQ and PurL and is thought to assist in the transfer of the ammonia molecule from PurQ to PurL. The sequence is that of Phosphoribosylformylglycinamidine synthase subunit PurL from Exiguobacterium sp. (strain ATCC BAA-1283 / AT1b).